The primary structure comprises 485 residues: NADH-quinone oxidoreductase subunit N (485 aa).

The next 14 membrane-spanning stretches (helical) occupy residues 8 to 28, 35 to 55, 71 to 91, 105 to 125, 127 to 147, 159 to 179, 203 to 223, 235 to 255, 271 to 291, 297 to 317, 326 to 346, 373 to 393, 408 to 430, and 455 to 475; these read LIALLPLLIVGLTVVVVMLSI, FLNATLSVIGLNAALVSLWFV, GFAMLYTGLVLLASLATCTFA, FYLLVLIAALGGILLANANHL, SLFLGIELISLPLFGLVGYAF, YTILSAAASSFLLFGMALVYA, LLAGFGLMIVGLGFKLSLVPF, PAPVSTFLATASKIVIFGVVM, VVLAIIAFASIIFGNLMALSQ, LLGYSSISHLGYLLVALIALQ, VGVYLAGYLFSSLGAFGVVSL, AAVMTVMMLSLAGIPMTLGFI, WWLVGAVVVGSAIGLYYYLRVAV, and IVVLISALLVLVLGVWPQPLI.

It belongs to the complex I subunit 2 family. As to quaternary structure, NDH-1 is composed of 13 different subunits. Subunits NuoA, H, J, K, L, M, N constitute the membrane sector of the complex.

The protein resides in the cell inner membrane. It carries out the reaction a quinone + NADH + 5 H(+)(in) = a quinol + NAD(+) + 4 H(+)(out). Its function is as follows. NDH-1 shuttles electrons from NADH, via FMN and iron-sulfur (Fe-S) centers, to quinones in the respiratory chain. The immediate electron acceptor for the enzyme in this species is believed to be ubiquinone. Couples the redox reaction to proton translocation (for every two electrons transferred, four hydrogen ions are translocated across the cytoplasmic membrane), and thus conserves the redox energy in a proton gradient. This is NADH-quinone oxidoreductase subunit N from Shigella dysenteriae serotype 1 (strain Sd197).